A 1025-amino-acid polypeptide reads, in one-letter code: Beta-galactosidase (1025 aa).

Substrate is bound by residues Asn103 and Asp202. Position 202 (Asp202) interacts with Na(+). Mg(2+)-binding residues include Glu417, His419, and Glu462. Substrate-binding positions include Glu462 and 538 to 541 (EYAH). Glu462 acts as the Proton donor in catalysis. Glu538 serves as the catalytic Nucleophile. Asn598 lines the Mg(2+) pocket. Residues Phe602 and Asn605 each coordinate Na(+). Substrate-binding residues include Asn605 and Trp1003.

This sequence belongs to the glycosyl hydrolase 2 family. As to quaternary structure, homotetramer. The cofactor is Mg(2+). Na(+) serves as cofactor.

The enzyme catalyses Hydrolysis of terminal non-reducing beta-D-galactose residues in beta-D-galactosides.. The polypeptide is Beta-galactosidase (Citrobacter koseri (strain ATCC BAA-895 / CDC 4225-83 / SGSC4696)).